Consider the following 156-residue polypeptide: 6,7-dimethyl-8-ribityllumazine synthase (156 aa).

5-amino-6-(D-ribitylamino)uracil is bound by residues F23, 57-59 (AYE), and 81-83 (AII). 86–87 (GT) is a binding site for (2S)-2-hydroxy-3-oxobutyl phosphate. The active-site Proton donor is H89. F114 lines the 5-amino-6-(D-ribitylamino)uracil pocket. R128 serves as a coordination point for (2S)-2-hydroxy-3-oxobutyl phosphate.

The protein belongs to the DMRL synthase family.

The enzyme catalyses (2S)-2-hydroxy-3-oxobutyl phosphate + 5-amino-6-(D-ribitylamino)uracil = 6,7-dimethyl-8-(1-D-ribityl)lumazine + phosphate + 2 H2O + H(+). Its pathway is cofactor biosynthesis; riboflavin biosynthesis; riboflavin from 2-hydroxy-3-oxobutyl phosphate and 5-amino-6-(D-ribitylamino)uracil: step 1/2. Its function is as follows. Catalyzes the formation of 6,7-dimethyl-8-ribityllumazine by condensation of 5-amino-6-(D-ribitylamino)uracil with 3,4-dihydroxy-2-butanone 4-phosphate. This is the penultimate step in the biosynthesis of riboflavin. The chain is 6,7-dimethyl-8-ribityllumazine synthase from Helicobacter pylori (strain HPAG1).